A 123-amino-acid polypeptide reads, in one-letter code: Fluoride-specific ion channel FluC (123 aa).

A run of 4 helical transmembrane segments spans residues 7-27 (LAVA…SGLL), 39-59 (MVNG…FWGF), 68-88 (FLGT…YETF), and 101-121 (LNVA…FLLA). Na(+)-binding residues include glycine 75 and serine 78.

The protein belongs to the fluoride channel Fluc/FEX (TC 1.A.43) family.

The protein localises to the cell membrane. The catalysed reaction is fluoride(in) = fluoride(out). Its activity is regulated as follows. Na(+) is not transported, but it plays an essential structural role and its presence is essential for fluoride channel function. In terms of biological role, fluoride-specific ion channel. Important for reducing fluoride concentration in the cell, thus reducing its toxicity. The sequence is that of Fluoride-specific ion channel FluC from Thermococcus gammatolerans (strain DSM 15229 / JCM 11827 / EJ3).